Here is a 281-residue protein sequence, read N- to C-terminus: Glyoxalase 1 (281 aa).

2 VOC domains span residues 4 to 127 and 132 to 251; these read RALH…IGKA and KVLR…FVGD.

Belongs to the glyoxalase I family.

Thought to act as a glyoxalase. May remove methylglyoxal from mitochondrial proteins. Has roles in reducing oxidative stress and increasing lifespan. The protein is Glyoxalase 1 of Caenorhabditis briggsae.